Reading from the N-terminus, the 272-residue chain is MSTGLVNAREKEYLHLHRIDKHKCSHSSATSSPSSAASSESSRTRQRRSDGEVYGSRHNNYKSSSQHRRRSRSGSDSPQVRHYSGRTSRDRQRMRQARDHPQASRCIGVFGLNTNTTQQKVRELFNKFGPIERIQMVIDAHTHRSRGFCFIYFENLGDARVAKDACTGMEVDGRRIRVDYSITQRAHTPTPGVYMGRPSRPLGRRSRERDYSTRDTSRSRRRHRDESSSVSPYDSNRRKYRSRHRYDRSRSRTRSYSRSRSPRKPVRVQSRY.

Disordered stretches follow at residues 21 to 102 and 182 to 272; these read KHKC…DHPQ and ITQR…QSRY. Residues 26–41 are compositionally biased toward low complexity; sequence HSSATSSPSSAASSES. The span at 87–102 shows a compositional bias: basic and acidic residues; sequence TSRDRQRMRQARDHPQ. The region spanning 105 to 183 is the RRM domain; that stretch reads RCIGVFGLNT…RRIRVDYSIT (79 aa). The linker stretch occupies residues 184 to 204; that stretch reads QRAHTPTPGVYMGRPSRPLGR. Basic and acidic residues predominate over residues 205–218; sequence RSRERDYSTRDTSR. Residues 238-266 show a composition bias toward basic residues; it reads RKYRSRHRYDRSRSRTRSYSRSRSPRKPV.

The protein belongs to the splicing factor SR family. In terms of processing, extensively phosphorylated on serine residues in the RS domain.

Functionally, required for female sex determination in somatic cells and for spermatogenesis in male germ cells. Positive regulator of female-specific splicing and/or polyadenylation of doublesex (dsx) pre-mRNA. Splicing requires an enhancer complex, dsxRE (dsx repeat element: which contains six copies of a 13-nucleotide repeat and a purine-rich enhancer (PRE)). DsxRE is formed through cooperative interactions between tra, tra2 and the sr proteins, and these interactions require both the repeat sequences and PRE. PRE is required for specific binding of tra2 to the dsxRE. Protein-RNA and protein-protein interactions are involved in tra-2 dependent activation and repression of alternative splicing. The protein is Transformer-2 sex-determining protein (tra2) of Drosophila virilis (Fruit fly).